The primary structure comprises 496 residues: Lysine--tRNA ligase (496 aa).

2 residues coordinate Mg(2+): Glu407 and Glu414.

The protein belongs to the class-II aminoacyl-tRNA synthetase family. As to quaternary structure, homodimer. It depends on Mg(2+) as a cofactor.

The protein localises to the cytoplasm. It carries out the reaction tRNA(Lys) + L-lysine + ATP = L-lysyl-tRNA(Lys) + AMP + diphosphate. The polypeptide is Lysine--tRNA ligase (Staphylococcus haemolyticus (strain JCSC1435)).